Here is a 130-residue protein sequence, read N- to C-terminus: Small ribosomal subunit protein uS8 (130 aa).

This sequence belongs to the universal ribosomal protein uS8 family. In terms of assembly, part of the 30S ribosomal subunit.

Its function is as follows. One of the primary rRNA binding proteins, it binds directly to 16S rRNA central domain where it helps coordinate assembly of the platform of the 30S subunit. This Haloquadratum walsbyi (strain DSM 16790 / HBSQ001) protein is Small ribosomal subunit protein uS8.